We begin with the raw amino-acid sequence, 38 residues long: Photosystem II reaction center protein L (38 aa).

Residues serine 17–phenylalanine 37 form a helical membrane-spanning segment.

Belongs to the PsbL family. As to quaternary structure, PSII is composed of 1 copy each of membrane proteins PsbA, PsbB, PsbC, PsbD, PsbE, PsbF, PsbH, PsbI, PsbJ, PsbK, PsbL, PsbM, PsbT, PsbY, PsbZ, Psb30/Ycf12, at least 3 peripheral proteins of the oxygen-evolving complex and a large number of cofactors. It forms dimeric complexes.

The protein localises to the plastid. It localises to the chloroplast thylakoid membrane. Its function is as follows. One of the components of the core complex of photosystem II (PSII). PSII is a light-driven water:plastoquinone oxidoreductase that uses light energy to abstract electrons from H(2)O, generating O(2) and a proton gradient subsequently used for ATP formation. It consists of a core antenna complex that captures photons, and an electron transfer chain that converts photonic excitation into a charge separation. This subunit is found at the monomer-monomer interface and is required for correct PSII assembly and/or dimerization. In Cyanidium caldarium (Red alga), this protein is Photosystem II reaction center protein L.